We begin with the raw amino-acid sequence, 132 residues long: Small ribosomal subunit protein uS8 (132 aa).

Belongs to the universal ribosomal protein uS8 family. As to quaternary structure, part of the 30S ribosomal subunit. Contacts proteins S5 and S12.

In terms of biological role, one of the primary rRNA binding proteins, it binds directly to 16S rRNA central domain where it helps coordinate assembly of the platform of the 30S subunit. This chain is Small ribosomal subunit protein uS8, found in Psychrobacter cryohalolentis (strain ATCC BAA-1226 / DSM 17306 / VKM B-2378 / K5).